Here is a 510-residue protein sequence, read N- to C-terminus: MIWHVQNENFILDSTRIFMKAFHLLLFDGSLIFPECILIFGLILLLMIDLTSDQKDIPWLYFISSTSLVMSITALLFRWREEPMISFSGNFQTNNFNEIFQFLILLCSTLCIPLSVEYIECTEMAITEFLLFVLTATLGGMFLCGANDLITIFVALECFSLCSYLLSGYTKKDVRSNEATMKYLLMGGASSSILVYGFSWLYGLSGGEIELQEIVNGLINTQMYNSPGISIALIFITVGIGFKLSLAPFHQWTPDVYEGSPTPVVAFLSVTSKVAALALATRIFDIPFYFSSNEWHLLLEILAILSMILGNLIAITQTSMKRMLAYSSIGQIGYVIIGIIVGDSNDGYASMITYMLFYISMNLGTFACIVLFGLRTGTDNIRDYAGLYTKDPFLALSLALCLLSLGGLPPLAGFFGKLYLFWCGWQAGLYFLVLIGLLTSVVSIYYYLKIIKLLMTGRNQEITPHVRNYRRSPLRSNNSIELSMIVCVIASTILGISMNPIIAIAQDSLF.

The next 14 membrane-spanning stretches (helical) occupy residues 31-51, 57-77, 99-119, 124-144, 149-169, 184-204, 229-249, 261-281, 295-315, 323-343, 354-374, 395-415, 418-438, and 484-504; these read LIFP…IDLT, IPWL…ALLF, IFQF…VEYI, MAIT…MFLC, LITI…LSGY, LLMG…LYGL, ISIA…LAPF, PTPV…ALAT, WHLL…LIAI, MLAY…IVGD, YMLF…LFGL, ALSL…AGFF, LYLF…IGLL, and MIVC…IIAI.

Belongs to the complex I subunit 2 family. NDH is composed of at least 16 different subunits, 5 of which are encoded in the nucleus.

It localises to the plastid. Its subcellular location is the chloroplast thylakoid membrane. The catalysed reaction is a plastoquinone + NADH + (n+1) H(+)(in) = a plastoquinol + NAD(+) + n H(+)(out). It carries out the reaction a plastoquinone + NADPH + (n+1) H(+)(in) = a plastoquinol + NADP(+) + n H(+)(out). Its function is as follows. NDH shuttles electrons from NAD(P)H:plastoquinone, via FMN and iron-sulfur (Fe-S) centers, to quinones in the photosynthetic chain and possibly in a chloroplast respiratory chain. The immediate electron acceptor for the enzyme in this species is believed to be plastoquinone. Couples the redox reaction to proton translocation, and thus conserves the redox energy in a proton gradient. The polypeptide is NAD(P)H-quinone oxidoreductase subunit 2 A, chloroplastic (Nicotiana tabacum (Common tobacco)).